The following is a 756-amino-acid chain: Cholesterol uptake protein 1 (756 aa).

The signal sequence occupies residues 1 to 18 (MRTSQAIFILIFLDSVRN). Over 19–268 (QSPQVIPAKW…TIESSMKIFD (250 aa)) the chain is Extracellular. N-linked (GlcNAc...) asparagine glycosylation is found at asparagine 39 and asparagine 63. The short motif at 124 to 129 (VHYNFR) is the Cholesterol-binding sequence motif element. 3 N-linked (GlcNAc...) asparagine glycosylation sites follow: asparagine 140, asparagine 174, and asparagine 257. A helical transmembrane segment spans residues 269 to 289 (YTIPIVFWACILLLVTIVVFV). Topologically, residues 290 to 373 (YHYFDGIWER…YEERELKYDV (84 aa)) are cytoplasmic. A helical membrane pass occupies residues 374-394 (YKIALAIIGIFYNITVLQLII). Residues 395 to 421 (SKAGSLRQSGDLDECTFNFQCARPLWY) lie on the Extracellular side of the membrane. A helical transmembrane segment spans residues 422–442 (FVAFNNVVSNGGYVYFGTLII). The Cytoplasmic segment spans residues 443–473 (VMNYCRERSFRRLFAVQPTLAERYGLPQHSG). A helical transmembrane segment spans residues 474–494 (LMTAIGLAVIMEGISSATYHV). Residues 495–498 (CPNN) are Extracellular-facing. Residues 499–517 (INYQFDTALMYVIGMLGKL) traverse the membrane as a helical segment. Over 518–530 (KIWSLRHPDMVVS) the chain is Cytoplasmic. The helical transmembrane segment at 531 to 551 (AYHAFGFLGVFLMAAIAGVYV) threads the bilayer. Residues 552-554 (HNM) lie on the Extracellular side of the membrane. Residues 555 to 575 (IFWALFSIIYIASMLLVSLEF) form a helical membrane-spanning segment. The short motif at 570–578 (LVSLEFYFK) is the Cholesterol-binding sequence motif element. Residues 576-612 (YFKGIWTLNLRELRNSIRLSWVSSRHLSCVVPAYKAR) lie on the Cytoplasmic side of the membrane. Residues 613–633 (FFVILLLNIANTAVVVYGLEA) form a helical membrane-spanning segment. At 634–637 (HPKD) the chain is on the extracellular side. Residues 638–658 (FLSFLLIPFIGNLFIYIIYYI) traverse the membrane as a helical segment. Topologically, residues 659–671 (LMKMIYREKIPKR) are cytoplasmic. The helical transmembrane segment at 672 to 692 (AIALLFAAVISWTCAGILFNQ) threads the bilayer. The Extracellular portion of the chain corresponds to 693-728 (RVSDWSKMPAISRELNKPCIFLNFYDNHDLWHLSSA). The chain crosses the membrane as a helical span at residues 729–749 (FAIFFSFTAINVIDDDLMFVM). The Cytoplasmic portion of the chain corresponds to 750 to 756 (RNTIRVF).

The protein belongs to the SID1 family. Highly expressed along the intestine with expression also detected in the pharynx, especially at the terminal bulb, and in the excretory gland cells.

It is found in the cell membrane. It catalyses the reaction cholesterol(in) = cholesterol(out). In terms of biological role, cholesterol-binding protein which is involved in dietary cholesterol uptake from the environment. Does not play a role in double-stranded RNA transport in contrast to other SID1 family members. The chain is Cholesterol uptake protein 1 from Caenorhabditis elegans.